We begin with the raw amino-acid sequence, 228 residues long: Demethylmenaquinone methyltransferase (228 aa).

S-adenosyl-L-methionine contacts are provided by residues Thr-62, Asp-80, 100 to 101 (DA), and Ser-117.

This sequence belongs to the class I-like SAM-binding methyltransferase superfamily. MenG/UbiE family.

It carries out the reaction a 2-demethylmenaquinol + S-adenosyl-L-methionine = a menaquinol + S-adenosyl-L-homocysteine + H(+). It functions in the pathway quinol/quinone metabolism; menaquinone biosynthesis; menaquinol from 1,4-dihydroxy-2-naphthoate: step 2/2. Methyltransferase required for the conversion of demethylmenaquinol (DMKH2) to menaquinol (MKH2). In Mycolicibacterium vanbaalenii (strain DSM 7251 / JCM 13017 / BCRC 16820 / KCTC 9966 / NRRL B-24157 / PYR-1) (Mycobacterium vanbaalenii), this protein is Demethylmenaquinone methyltransferase.